A 280-amino-acid chain; its full sequence is UPF0276 protein CC_2906 (280 aa).

Belongs to the UPF0276 family.

The sequence is that of UPF0276 protein CC_2906 from Caulobacter vibrioides (strain ATCC 19089 / CIP 103742 / CB 15) (Caulobacter crescentus).